The following is a 79-amino-acid chain: Acyl carrier protein (79 aa).

A Carrier domain is found at 2 to 77; sequence SDIEARVKKI…NAIDYANTHH (76 aa). Ser-37 carries the O-(pantetheine 4'-phosphoryl)serine modification.

Belongs to the acyl carrier protein (ACP) family. Post-translationally, 4'-phosphopantetheine is transferred from CoA to a specific serine of apo-ACP by AcpS. This modification is essential for activity because fatty acids are bound in thioester linkage to the sulfhydryl of the prosthetic group.

It is found in the cytoplasm. It participates in lipid metabolism; fatty acid biosynthesis. Its function is as follows. Carrier of the growing fatty acid chain in fatty acid biosynthesis. In Polaromonas naphthalenivorans (strain CJ2), this protein is Acyl carrier protein.